Reading from the N-terminus, the 282-residue chain is NAC domain-containing protein 1 (282 aa).

One can recognise an NAC domain in the interval 9–161 (LPPGFRFHPT…DWVLCRIYKK (153 aa)). Residues 106–167 (VGIKKALVFY…IYKKKNLGRT (62 aa)) mediate DNA binding. Residues 161–188 (KKNLGRTIEMMKVEEEELEAQNVSTTNN) adopt a coiled-coil conformation.

Expressed in roots, stem, flowers, and leaves.

Its subcellular location is the nucleus. In terms of biological role, transcription factor that binds DNA motifs 5'-CGT[AG](5N)NACG[ACT][AC][AT][ACG][ACT]-3' and 5'-CACG[ACT][AC][AT][AGT][CT]-3' in target genes promoters. Promotes leaf senescence and reduces fruit yield and sugar content, probably by establishing abscisic acid (ABA) homeostasis. In Solanum lycopersicum (Tomato), this protein is NAC domain-containing protein 1.